The primary structure comprises 340 residues: Protein-arginine kinase (340 aa).

Residues 21 to 242 (VVLSSRIRLA…EQIIMQERVA (222 aa)) form the Phosphagen kinase C-terminal domain. ATP contacts are provided by residues 24-28 (SSRIR), His79, Arg113, 164-168 (RASVM), and 195-200 (RGIYGE).

The protein belongs to the ATP:guanido phosphotransferase family.

The enzyme catalyses L-arginyl-[protein] + ATP = N(omega)-phospho-L-arginyl-[protein] + ADP + H(+). Its function is as follows. Catalyzes the specific phosphorylation of arginine residues in proteins. The sequence is that of Protein-arginine kinase from Listeria monocytogenes serotype 4b (strain F2365).